We begin with the raw amino-acid sequence, 421 residues long: Serine--tRNA ligase (421 aa).

229 to 231 (TAE) contributes to the L-serine binding site. 260 to 262 (RAE) provides a ligand contact to ATP. E283 lines the L-serine pocket. 347–350 (EISS) is an ATP binding site. Position 383 (S383) interacts with L-serine.

This sequence belongs to the class-II aminoacyl-tRNA synthetase family. Type-1 seryl-tRNA synthetase subfamily. As to quaternary structure, homodimer. The tRNA molecule binds across the dimer.

It is found in the cytoplasm. It carries out the reaction tRNA(Ser) + L-serine + ATP = L-seryl-tRNA(Ser) + AMP + diphosphate + H(+). The catalysed reaction is tRNA(Sec) + L-serine + ATP = L-seryl-tRNA(Sec) + AMP + diphosphate + H(+). The protein operates within aminoacyl-tRNA biosynthesis; selenocysteinyl-tRNA(Sec) biosynthesis; L-seryl-tRNA(Sec) from L-serine and tRNA(Sec): step 1/1. Functionally, catalyzes the attachment of serine to tRNA(Ser). Is also able to aminoacylate tRNA(Sec) with serine, to form the misacylated tRNA L-seryl-tRNA(Sec), which will be further converted into selenocysteinyl-tRNA(Sec). The protein is Serine--tRNA ligase of Desulfitobacterium hafniense (strain Y51).